A 493-amino-acid chain; its full sequence is Glutamyl-tRNA(Gln) amidotransferase subunit A (493 aa).

Active-site charge relay system residues include Lys78 and Ser158. The active-site Acyl-ester intermediate is the Ser182.

The protein belongs to the amidase family. GatA subfamily. As to quaternary structure, heterotrimer of A, B and C subunits.

The catalysed reaction is L-glutamyl-tRNA(Gln) + L-glutamine + ATP + H2O = L-glutaminyl-tRNA(Gln) + L-glutamate + ADP + phosphate + H(+). Allows the formation of correctly charged Gln-tRNA(Gln) through the transamidation of misacylated Glu-tRNA(Gln) in organisms which lack glutaminyl-tRNA synthetase. The reaction takes place in the presence of glutamine and ATP through an activated gamma-phospho-Glu-tRNA(Gln). The chain is Glutamyl-tRNA(Gln) amidotransferase subunit A from Rickettsia bellii (strain RML369-C).